A 66-amino-acid polypeptide reads, in one-letter code: Large ribosomal subunit protein bL35 (66 aa).

The interval 20-40 (GKVKHAQRGKRHGMIKRTKKQ) is disordered.

This sequence belongs to the bacterial ribosomal protein bL35 family.

This Nitrobacter winogradskyi (strain ATCC 25391 / DSM 10237 / CIP 104748 / NCIMB 11846 / Nb-255) protein is Large ribosomal subunit protein bL35.